The chain runs to 92 residues: Sec-independent protein translocase protein TatA (92 aa).

A helical transmembrane segment spans residues 1–21 (MGIFDWKHWIVILVVVVLVFG). The segment at 43–92 (MNDDEKPADPTVTPAQPVPPVQPQATAQANPPHTIDVQAQKVEEPIRKDV) is disordered. A compositionally biased stretch (low complexity) spans 65–74 (PQATAQANPP). Residues 83-92 (KVEEPIRKDV) show a composition bias toward basic and acidic residues.

The protein belongs to the TatA/E family. As to quaternary structure, the Tat system comprises two distinct complexes: a TatABC complex, containing multiple copies of TatA, TatB and TatC subunits, and a separate TatA complex, containing only TatA subunits. Substrates initially bind to the TatABC complex, which probably triggers association of the separate TatA complex to form the active translocon.

It localises to the cell inner membrane. In terms of biological role, part of the twin-arginine translocation (Tat) system that transports large folded proteins containing a characteristic twin-arginine motif in their signal peptide across membranes. TatA could form the protein-conducting channel of the Tat system. The chain is Sec-independent protein translocase protein TatA from Pseudomonas fluorescens (strain Pf0-1).